The sequence spans 85 residues: Putative membrane protein insertion efficiency factor (85 aa).

The protein belongs to the UPF0161 family.

The protein localises to the cell inner membrane. Its function is as follows. Could be involved in insertion of integral membrane proteins into the membrane. In Escherichia coli O157:H7, this protein is Putative membrane protein insertion efficiency factor.